The following is a 960-amino-acid chain: Dynamin-like GTPase OPA1, mitochondrial (960 aa).

Residues 1-87 constitute a mitochondrion transit peptide; the sequence is MWRAGRAAVA…IKYGYQPRRN (87 aa). Over 88 to 96 the chain is Mitochondrial matrix; sequence FWPARLAAR. A helical membrane pass occupies residues 97 to 113; the sequence is LLKLRYIILGSAVGGGY. Over 114-770 the chain is Mitochondrial intermembrane; it reads TAKKTFDEWK…NAIENMIGPD (657 aa). The stretch at 210 to 254 forms a coiled coil; that stretch reads SDKEKIDQLQEELLHTQLKYQRILERLEKENKELRKLVLQKDDKG. The LQQQIQ motif signature appears at 217–222; that stretch reads QLQEEL. K228 is subject to N6-acetyllysine. The region spanning 285-561 is the Dynamin-type G domain; sequence QDHLPRVVVV…FWKMVRESVE (277 aa). The tract at residues 295-302 is G1 motif; sequence GDQSAGKT. Residues S298, G300, K301, T302, S303, and G317 each contribute to the GTP site. Residue T302 participates in Mg(2+) binding. Residues 321-324 form a G2 motif region; sequence MMTR. The Mg(2+) site is built by T323 and D398. Positions 398–401 are G3 motif; that stretch reads DLPG. The segment at 467–470 is G4 motif; sequence TKVD. K468, D470, and T503 together coordinate GTP. Residues 501–504 form a G5 motif region; the sequence is VVTG. Stalk region regions lie at residues 589–836 and 874–928; these read DRNE…IKDT and CNDV…VKLL. Residues 736–856 form a paddle region region; sequence SDKQQWDAAI…KTALNHCNLC (121 aa). The stretch at 771-781 is an intramembrane region; the sequence is WKKRWMYWKNR. Residues 782–960 lie on the Mitochondrial intermembrane side of the membrane; it reads TQEQCVHNET…AFIEALHQEK (179 aa). An intrachain disulfide couples C856 to C874. Positions 895–960 form a coiled coil; the sequence is RQQLTNTEVR…AFIEALHQEK (66 aa).

Belongs to the TRAFAC class dynamin-like GTPase superfamily. Dynamin/Fzo/YdjA family. Oligomeric complex consisting of membrane-bound and soluble forms of OPA1. Interacts with RCC1L; RCC1L acts as a guanine nucleotide exchange factor (GEF) for OPA1 by exchanging bound GDP for free GTP. Interacts with CHCHD3 and IMMT; these interactions occur preferentially with soluble OPA1 forms. Interacts with PRELID1. In terms of processing, cleaved by OMA1 or YME1L downstream of the transmembrane region in response to different signals to generate soluble forms. Cleaved by OMA1 at position S1 following stress conditions, generating the short soluble form (Dynamin-like GTPase OPA1, short form; S-OPA1). AFG3L2 is involved in the regulation of OMA1-dependent processing of OPA1. PARL-dependent proteolytic processing releases an antiapoptotic soluble form not required for mitochondrial fusion. Cleavage at position S2 by YME1L is required to mediate oxidative phosphorylation (OXPHOS)-induced mitochondrial fusion. Cleavage occurs in the sequence motif Leu-Gln-Gln-Gln-Ile-Gln (LQQQIQ). Post-translationally, cleavage at position S3 by YME1L is required for membrane tubulation. As to expression, detected in brain (at protein level). Detected in brain, brain stem, heart, kidney, liver and skeletal muscle.

It localises to the mitochondrion inner membrane. The protein localises to the mitochondrion intermembrane space. The enzyme catalyses GTP + H2O = GDP + phosphate + H(+). Its activity is regulated as follows. Activated by guanine nucleotide exchange factor RCC1L. In terms of biological role, dynamin-related GTPase that is essential for normal mitochondrial morphology by mediating fusion of the mitochondrial inner membranes, regulating cristae morphology and maintaining respiratory chain function. Exists in two forms: the transmembrane, long form (Dynamin-like GTPase OPA1, long form; L-OPA1), which is tethered to the inner mitochondrial membrane, and the short soluble form (Dynamin-like GTPase OPA1, short form; S-OPA1), which results from proteolytic cleavage and localizes in the intermembrane space. Both forms (L-OPA1 and S-OPA1) cooperate to catalyze the fusion of the mitochondrial inner membrane. The equilibrium between L-OPA1 and S-OPA1 is essential: excess levels of S-OPA1, produced by cleavage by OMA1 following loss of mitochondrial membrane potential, lead to an impaired equilibrium between L-OPA1 and S-OPA1, inhibiting mitochondrial fusion. The balance between L-OPA1 and S-OPA1 also influences cristae shape and morphology. Involved in remodeling cristae and the release of cytochrome c during apoptosis. Proteolytic processing by PARL in response to intrinsic apoptotic signals may lead to disassembly of OPA1 oligomers and release of the caspase activator cytochrome C (CYCS) into the mitochondrial intermembrane space. Acts as a regulator of T-helper Th17 cells, which are characterized by cells with fused mitochondria with tight cristae, by mediating mitochondrial membrane remodeling: OPA1 is required for interleukin-17 (IL-17) production. Its role in mitochondrial morphology is required for mitochondrial genome maintenance. Functionally, constitutes the transmembrane long form (L-OPA1) that plays a central role in mitochondrial inner membrane fusion and cristae morphology. L-OPA1 and the soluble short form (S-OPA1) form higher-order helical assemblies that coordinate the fusion of mitochondrial inner membranes. Inner membrane-anchored L-OPA1 molecules initiate membrane remodeling by recruiting soluble S-OPA1 to rapidly polymerize into a flexible cylindrical scaffold encaging the mitochondrial inner membrane. Once at the membrane surface, the formation of S-OPA1 helices induce bilayer curvature. OPA1 dimerization through the paddle region, which inserts into cardiolipin-containing membrane, promotes GTP hydrolysis and the helical assembly of a flexible OPA1 lattice on the membrane, which drives membrane curvature and mitochondrial fusion. Plays a role in the maintenance and remodeling of mitochondrial cristae, some invaginations of the mitochondrial inner membrane that provide an increase in the surface area. Probably acts by forming helical filaments at the inside of inner membrane tubes with the shape and dimensions of crista junctions. The equilibrium between L-OPA1 and S-OPA1 influences cristae shape and morphology: increased L-OPA1 levels promote cristae stacking and elongated mitochondria, while increased S-OPA1 levels correlated with irregular cristae packing and round mitochondria shape. Constitutes the soluble short form (S-OPA1) generated by cleavage by OMA1, which plays a central role in mitochondrial inner membrane fusion and cristae morphology. The transmembrane long form (L-OPA1) and the S-OPA1 form higher-order helical assemblies that coordinate the fusion of mitochondrial inner membranes. Inner membrane-anchored L-OPA1 molecules initiate membrane remodeling by recruiting soluble S-OPA1 to rapidly polymerize into a flexible cylindrical scaffold encaging the mitochondrial inner membrane. Once at the membrane surface, the formation of S-OPA1 helices induce bilayer curvature. OPA1 dimerization through the paddle region, which inserts into cardiolipin-containing membrane, promotes GTP hydrolysis and the helical assembly of a flexible OPA1 lattice on the membrane, which drives membrane curvature and mitochondrial fusion. Excess levels of S-OPA1 produced by cleavage by OMA1 following stress conditions that induce loss of mitochondrial membrane potential, lead to an impaired equilibrium between L-OPA1 and S-OPA1, thereby inhibiting mitochondrial fusion. Involved in mitochondrial safeguard in response to transient mitochondrial membrane depolarization by mediating flickering: cleavage by OMA1 leads to excess production of S-OPA1, preventing mitochondrial hyperfusion. Plays a role in the maintenance and remodeling of mitochondrial cristae, some invaginations of the mitochondrial inner membrane that provide an increase in the surface area. Probably acts by forming helical filaments at the inside of inner membrane tubes with the shape and dimensions of crista junctions. The equilibrium between L-OPA1 and S-OPA1 influences cristae shape and morphology: increased L-OPA1 levels promote cristae stacking and elongated mitochondria, while increased S-OPA1 levels correlated with irregular cristae packing and round mitochondria shape. Its function is as follows. Isoforms that contain the alternative exon 4b are required for mitochondrial genome maintenance, possibly by anchoring the mitochondrial nucleoids to the inner mitochondrial membrane. The sequence is that of Dynamin-like GTPase OPA1, mitochondrial from Mus musculus (Mouse).